The primary structure comprises 286 residues: Thymidylate synthase (286 aa).

A dUMP-binding site is contributed by 140 to 141; it reads RR. Cys161 (nucleophile) is an active-site residue. DUMP-binding positions include 185-188, Asn196, and 226-228; these read RSND and HIY. Asp188 contributes to the (6R)-5,10-methylene-5,6,7,8-tetrahydrofolate binding site. A (6R)-5,10-methylene-5,6,7,8-tetrahydrofolate-binding site is contributed by Ala285.

This sequence belongs to the thymidylate synthase family. Bacterial-type ThyA subfamily. Homodimer.

The protein localises to the cytoplasm. The enzyme catalyses dUMP + (6R)-5,10-methylene-5,6,7,8-tetrahydrofolate = 7,8-dihydrofolate + dTMP. Its pathway is pyrimidine metabolism; dTTP biosynthesis. In terms of biological role, catalyzes the reductive methylation of 2'-deoxyuridine-5'-monophosphate (dUMP) to 2'-deoxythymidine-5'-monophosphate (dTMP) while utilizing 5,10-methylenetetrahydrofolate (mTHF) as the methyl donor and reductant in the reaction, yielding dihydrofolate (DHF) as a by-product. This enzymatic reaction provides an intracellular de novo source of dTMP, an essential precursor for DNA biosynthesis. The protein is Thymidylate synthase of Streptococcus thermophilus (strain CNRZ 1066).